The primary structure comprises 217 residues: Oxygen-insensitive NAD(P)H nitroreductase (217 aa).

10–14 (RHSTK) lines the FMN pocket. Lysine 14, threonine 41, threonine 67, asparagine 71, lysine 74, and arginine 107 together coordinate NAD(+). Asparagine 71 contacts FMN. FMN is bound by residues 165-166 (EG) and 205-207 (KSR).

Belongs to the nitroreductase family. Homodimer. It depends on FMN as a cofactor.

Reduction of a variety of nitroaromatic compounds using NADH (and to lesser extent NADPH) as source of reducing equivalents; two electrons are transferred. The sequence is that of Oxygen-insensitive NAD(P)H nitroreductase from Enterobacter cloacae.